The following is a 616-amino-acid chain: Dihydroxy-acid dehydratase (616 aa).

Asp-81 contributes to the Mg(2+) binding site. Residue Cys-122 participates in [2Fe-2S] cluster binding. Residues Asp-123 and Lys-124 each contribute to the Mg(2+) site. At Lys-124 the chain carries N6-carboxylysine. Cys-195 contributes to the [2Fe-2S] cluster binding site. Residue Glu-491 participates in Mg(2+) binding. Ser-517 functions as the Proton acceptor in the catalytic mechanism.

The protein belongs to the IlvD/Edd family. In terms of assembly, homodimer. The cofactor is [2Fe-2S] cluster. Mg(2+) serves as cofactor.

It catalyses the reaction (2R)-2,3-dihydroxy-3-methylbutanoate = 3-methyl-2-oxobutanoate + H2O. The enzyme catalyses (2R,3R)-2,3-dihydroxy-3-methylpentanoate = (S)-3-methyl-2-oxopentanoate + H2O. Its pathway is amino-acid biosynthesis; L-isoleucine biosynthesis; L-isoleucine from 2-oxobutanoate: step 3/4. The protein operates within amino-acid biosynthesis; L-valine biosynthesis; L-valine from pyruvate: step 3/4. In terms of biological role, functions in the biosynthesis of branched-chain amino acids. Catalyzes the dehydration of (2R,3R)-2,3-dihydroxy-3-methylpentanoate (2,3-dihydroxy-3-methylvalerate) into 2-oxo-3-methylpentanoate (2-oxo-3-methylvalerate) and of (2R)-2,3-dihydroxy-3-methylbutanoate (2,3-dihydroxyisovalerate) into 2-oxo-3-methylbutanoate (2-oxoisovalerate), the penultimate precursor to L-isoleucine and L-valine, respectively. This Yersinia pseudotuberculosis serotype I (strain IP32953) protein is Dihydroxy-acid dehydratase.